An 865-amino-acid chain; its full sequence is Ribosome biogenesis protein BOP1 homolog (865 aa).

Disordered regions lie at residues M1 to G195 and K207 to I240. 3 stretches are compositionally biased toward acidic residues: residues L30–Y44, N57–L79, and D87–A159. The segment covering K160–Q180 has biased composition (basic and acidic residues). 7 WD repeats span residues G526–T565, P567–V607, T651–P693, K696–K734, P737–Q776, I780–Q819, and V835–T865.

Belongs to the WD repeat BOP1/ERB1 family.

It localises to the nucleus. The protein localises to the nucleolus. The protein resides in the nucleoplasm. Its function is as follows. Required for maturation of ribosomal RNAs and formation of the large ribosomal subunit. This chain is Ribosome biogenesis protein BOP1 homolog, found in Anopheles gambiae (African malaria mosquito).